A 371-amino-acid polypeptide reads, in one-letter code: Cytochrome b (371 aa).

4 helical membrane-spanning segments follow: residues 25–45, 69–90, 105–125, and 170–190; these read FGSM…FLAI, WIMQ…YIHI, WLSG…GYVL, and FFAL…IHII. 2 residues coordinate heme b: histidine 75 and histidine 89. Heme b is bound by residues histidine 174 and histidine 188. Histidine 193 is a binding site for a ubiquinone. A run of 4 helical transmembrane segments spans residues 218–238, 280–300, 312–332, and 339–358; these read YKDT…LSFS, LGGT…PFTH, LAQM…WTAS, and FIII…IMNP.

This sequence belongs to the cytochrome b family. The cytochrome bc1 complex contains 3 respiratory subunits (MT-CYB, CYC1 and UQCRFS1), 2 core proteins (UQCRC1 and UQCRC2) and probably 6 low-molecular weight proteins. Heme b is required as a cofactor.

Its subcellular location is the mitochondrion inner membrane. Component of the ubiquinol-cytochrome c reductase complex (complex III or cytochrome b-c1 complex) that is part of the mitochondrial respiratory chain. The b-c1 complex mediates electron transfer from ubiquinol to cytochrome c. Contributes to the generation of a proton gradient across the mitochondrial membrane that is then used for ATP synthesis. The sequence is that of Cytochrome b (MT-CYB) from Sinomicrurus kelloggi (Kellogg's coral snake).